The primary structure comprises 350 residues: Chlorophyll a/b light-harvesting protein PcbA (350 aa).

A run of 6 helical transmembrane segments spans residues leucine 26–phenylalanine 46, leucine 62–valine 82, tyrosine 87–tyrosine 107, isoleucine 214–alanine 234, leucine 248–valine 268, and leucine 309–leucine 329.

This sequence belongs to the PsbB/PsbC family. IsiA/Pcb subfamily. The antenna complex consists of chlorophylls (a and b) and chlorophyll a/b binding proteins. Chlorophyll a is required as a cofactor. The cofactor is chlorophyll b.

It localises to the cellular thylakoid membrane. The antenna complex functions as a light receptor, it captures and delivers excitation energy to photosystems II and I. The Prochlorales pcb genes are not related to higher plant LHCs. This Prochlorothrix hollandica protein is Chlorophyll a/b light-harvesting protein PcbA (pcbA).